The sequence spans 158 residues: Protein-export protein SecB (158 aa).

This sequence belongs to the SecB family. Homotetramer, a dimer of dimers. One homotetramer interacts with 1 SecA dimer.

It localises to the cytoplasm. One of the proteins required for the normal export of preproteins out of the cell cytoplasm. It is a molecular chaperone that binds to a subset of precursor proteins, maintaining them in a translocation-competent state. It also specifically binds to its receptor SecA. The chain is Protein-export protein SecB from Photorhabdus laumondii subsp. laumondii (strain DSM 15139 / CIP 105565 / TT01) (Photorhabdus luminescens subsp. laumondii).